The primary structure comprises 107 residues: Prokineticin-2 (107 aa).

An N-terminal signal peptide occupies residues 1–26 (MEDPRCAPLLLLLLLPLLLTPPAGDA). Cystine bridges form between cysteine 33–cysteine 45, cysteine 39–cysteine 57, cysteine 44–cysteine 85, cysteine 67–cysteine 93, and cysteine 87–cysteine 103.

Belongs to the AVIT (prokineticin) family. Expressed at high levels in testis and at lower levels in brain, lung, ovary, spleen, thymus and uterus.

It localises to the secreted. In terms of biological role, may function as an output molecule from the suprachiasmatic nucleus (SCN) that transmits behavioral circadian rhythm. May also function locally within the SCN to synchronize output. Potently contracts gastrointestinal (GI) smooth muscle. This is Prokineticin-2 (Prok2) from Rattus norvegicus (Rat).